The chain runs to 191 residues: Peptidyl-tRNA hydrolase (191 aa).

Residue Y15 coordinates tRNA. Catalysis depends on H20, which acts as the Proton acceptor. TRNA-binding residues include F66, N68, and N114.

The protein belongs to the PTH family. As to quaternary structure, monomer.

Its subcellular location is the cytoplasm. The enzyme catalyses an N-acyl-L-alpha-aminoacyl-tRNA + H2O = an N-acyl-L-amino acid + a tRNA + H(+). In terms of biological role, hydrolyzes ribosome-free peptidyl-tRNAs (with 1 or more amino acids incorporated), which drop off the ribosome during protein synthesis, or as a result of ribosome stalling. Functionally, catalyzes the release of premature peptidyl moieties from peptidyl-tRNA molecules trapped in stalled 50S ribosomal subunits, and thus maintains levels of free tRNAs and 50S ribosomes. In Streptococcus agalactiae serotype III (strain NEM316), this protein is Peptidyl-tRNA hydrolase.